The sequence spans 461 residues: Acetylcholine receptor subunit alpha (461 aa).

An N-terminal signal peptide occupies residues 1 to 24 (MILCSYWHVGLVLLLFSCCGLVLG). The Extracellular portion of the chain corresponds to 25-234 (SEHETRLVAN…ITYHFIMQRI (210 aa)). Disulfide bonds link Cys152/Cys166 and Cys216/Cys217. N-linked (GlcNAc...) asparagine glycosylation occurs at Asn165. The next 3 helical transmembrane spans lie at 235-259 (PLYF…VFYL), 267-285 (MTLS…LVIV), and 301-320 (YMLF…VVVI). The Cytoplasmic segment spans residues 321-432 (NTHHRSPSTH…WKYVAMVIDH (112 aa)). A helical transmembrane segment spans residues 433 to 451 (ILLCVFMLICIIGTVSVFA).

It belongs to the ligand-gated ion channel (TC 1.A.9) family. Acetylcholine receptor (TC 1.A.9.1) subfamily. Alpha-1/CHRNA1 sub-subfamily. As to quaternary structure, pentamer of two alpha chains, and one each of the beta, delta, and gamma chains.

It localises to the postsynaptic cell membrane. Its subcellular location is the cell membrane. The enzyme catalyses K(+)(in) = K(+)(out). It carries out the reaction Na(+)(in) = Na(+)(out). In terms of biological role, upon acetylcholine binding, the AChR responds by an extensive change in conformation that affects all subunits and leads to opening of an ion-conducting channel across the plasma membrane. The sequence is that of Acetylcholine receptor subunit alpha (CHRNA1) from Tetronarce californica (Pacific electric ray).